A 153-amino-acid chain; its full sequence is Insulin-like growth factor 1 (153 aa).

A b region spans residues 49-77; sequence GPETLCGAELVDALQFVCGDRGFYFNKPT. 3 disulfides stabilise this stretch: Cys54-Cys96, Cys66-Cys109, and Cys95-Cys100. The segment at 78–89 is c; sequence GYGSSSRRAPQT. The a stretch occupies residues 90–110; that stretch reads GIVDECCFRSCDLRRLEMYCA. The interval 111 to 118 is d; it reads PLKPAKSA. Residues 119 to 153 constitute a propeptide, e peptide; it reads RSVRAQRHTDMPKAQKEVHLKNASRGSAGNKNYRM. The disordered stretch occupies residues 120–153; that stretch reads SVRAQRHTDMPKAQKEVHLKNASRGSAGNKNYRM. Residues 125–138 show a composition bias toward basic and acidic residues; sequence RHTDMPKAQKEVHL. Over residues 142–153 the composition is skewed to polar residues; sequence SRGSAGNKNYRM.

The protein belongs to the insulin family. Forms a ternary complex with IGFR1 and ITGAV:ITGB3. Forms a ternary complex with IGFR1 and ITGA6:ITGB4. Forms a ternary complex with IGFBP3 and ALS.

The protein resides in the secreted. Its function is as follows. The insulin-like growth factors, isolated from plasma, are structurally and functionally related to insulin but have a much higher growth-promoting activity. May be a physiological regulator of [1-14C]-2-deoxy-D-glucose (2DG) transport and glycogen synthesis in osteoblasts. Stimulates glucose transport in bone-derived osteoblastic (PyMS) cells and is effective at much lower concentrations than insulin, not only regarding glycogen and DNA synthesis but also with regard to enhancing glucose uptake. May play a role in synapse maturation. Ca(2+)-dependent exocytosis of IGF1 is required for sensory perception of smell in the olfactory bulb. Acts as a ligand for IGF1R. Binds to the alpha subunit of IGF1R, leading to the activation of the intrinsic tyrosine kinase activity which autophosphorylates tyrosine residues in the beta subunit thus initiating a cascade of down-stream signaling events leading to activation of the PI3K-AKT/PKB and the Ras-MAPK pathways. Binds to integrins ITGAV:ITGB3 and ITGA6:ITGB4. Its binding to integrins and subsequent ternary complex formation with integrins and IGFR1 are essential for IGF1 signaling. Induces the phosphorylation and activation of IGFR1, MAPK3/ERK1, MAPK1/ERK2 and AKT1. As part of the MAPK/ERK signaling pathway, acts as a negative regulator of apoptosis in cardiomyocytes via promotion of STUB1/CHIP-mediated ubiquitination and degradation of ICER-type isoforms of CREM. The sequence is that of Insulin-like growth factor 1 from Canis lupus familiaris (Dog).